The following is a 353-amino-acid chain: ATP-dependent kinase YFH7 (353 aa).

ATP is bound at residue Gly31–Thr39.

Belongs to the YFH7 family.

Its function is as follows. ATP-dependent kinase that could be involved in endoplasmic reticulum membrane assembly. The protein is ATP-dependent kinase YFH7 (YFH7) of Saccharomyces cerevisiae (strain ATCC 204508 / S288c) (Baker's yeast).